We begin with the raw amino-acid sequence, 630 residues long: Plastin-3 (630 aa).

EF-hand domains follow at residues 12-47 (DELDELKEAFAKVDLNSNGFICDYELHELFKEANMP) and 52-87 (KVREIIQKLMLDGDRNKDGKISFDEFVYIFQEVKSS). Ca(2+) is bound by residues Asp-25, Asn-27, Asn-29, Glu-36, Asp-65, Asn-67, Asp-69, Lys-71, and Glu-76. Actin-binding stretches follow at residues 109–382 (TSEL…ALTK) and 383–627 (PENQ…GRGM). 2 Calponin-homology (CH) domains span residues 123-239 (EEEK…KIGL) and 267-378 (LSPE…NKYP). Ser-268, Ser-293, Ser-326, and Ser-339 each carry phosphoserine. Phosphothreonine is present on Thr-391. Calponin-homology (CH) domains follow at residues 397 to 506 (TREE…RRYT) and 518 to 627 (KAND…GRGM).

As to quaternary structure, monomer. As to expression, expressed in a variety of organs, including muscle, brain, uterus and esophagus.

Its subcellular location is the cytoplasm. In terms of biological role, actin-bundling protein. This is Plastin-3 (PLS3) from Homo sapiens (Human).